Reading from the N-terminus, the 443-residue chain is MRISSVVEHRTPRVYVCYCLRSLSRPNQTYIGSTPDPIRRLRQHNGLVKQGAFYTRMARPWTMDVVVYGFPSKLAALQFEWSWQKPHASRHLRVMHDDGTRPNKSSATAAVYAGRSSKPLFPATRSSAPSSAASHDSGLNLRKKNRRVRMRSSTVPEYKFLVLRALLASEPFCFWHLHVGFYSEYAYGVWQFMDRANPTRYSVSRITRRPLPPSYPPVACDFRGVQGTNTPLAPPQDATAHTLRTSYPVLPEATTLSAAQKKKRSTSASCAPENEHMWAEEIPHARDAETLGLTWEQLEHAPTIARMEVPDGLMQASSAARGRSRRLRSHTSFLEALDQDASALEAHLVHASRKDMSSSICGLCGGHINRHVPLSYTHCPHACDAVFHLTCLARYSLEQETRAHARTFCLPTSAWCPMCQRPPVPWPEIVRRVFRRAELKVSM.

Residues 13 to 93 (RVYVCYCLRS…QKPHASRHLR (81 aa)) form the GIY-YIG domain. The segment at 121–140 (FPATRSSAPSSAASHDSGLN) is disordered. Residues 361–419 (CGLCGGHINRHVPLSYTHCPHACDAVFHLTCLARYSLEQETRAHARTFCLPTSAWCPMC) form an SLX1-type zinc finger.

This sequence belongs to the SLX1 family. As to quaternary structure, forms a heterodimer with SLX4. It depends on a divalent metal cation as a cofactor.

The protein localises to the nucleus. Its function is as follows. Catalytic subunit of the SLX1-SLX4 structure-specific endonuclease that resolves DNA secondary structures generated during DNA repair and recombination. Has endonuclease activity towards branched DNA substrates, introducing single-strand cuts in duplex DNA close to junctions with ss-DNA. This is Structure-specific endonuclease subunit SLX1 from Malassezia globosa (strain ATCC MYA-4612 / CBS 7966) (Dandruff-associated fungus).